A 524-amino-acid chain; its full sequence is MVNSEQALHQHDPAPILQLDKVSKSFGPVNVINQVSIDVRPGRVLALLGENGAGKSTLIKMMSGVYQPDGGQILVDGKPTTLPDTKTAESFGIATIHQELNLVPTMTVAENVMLGRTPRKWGLVNFKHLRRQAQAALDLIGVDVDLNAQVGSLGIARQQMVEIAKALSMNARILILDEPTAALTGREIDQLFKVVDQLKEKGVAMVFISHHLDEIARIGDTVSVLRDGQFIAELPADTDEDELVRLMVGRSIENQYPRSAPEIGQPLLEVKNLNAEGRFTDISLTVRAGEVVGLAGLVGAGRTEVVRSIAGVDKVDSGEVIVAGKKLRGGDISEAIKNGIGHIPEDRKAQGLVLGSSVEDNLGLATLASTARAGLVDRSGQHKRAAEVAEKLRIRMASLKQPISDLSGGNQQKAVFGRWVLAGSNVLLLDEPTRGVDVGAKVEIYNIINEMTEKGGAVLMVSSELPEVLGMADRILVMSGGRIAGELPAKGTTQDDVMALAVSQVDDSITEEAAAEIENTKEDR.

2 consecutive ABC transporter domains span residues 17 to 252 and 263 to 505; these read LQLD…GRSI and IGQP…VSQV. 49–56 lines the ATP pocket; that stretch reads GENGAGKS.

The protein belongs to the ABC transporter superfamily. Ribose importer (TC 3.A.1.2.1) family. The complex is composed of an ATP-binding protein (RbsA), two transmembrane proteins (RbsC) and a solute-binding protein (RbsB).

It localises to the cell membrane. It carries out the reaction D-ribose(out) + ATP + H2O = D-ribose(in) + ADP + phosphate + H(+). Part of the ABC transporter complex RbsABC involved in ribose import. Responsible for energy coupling to the transport system. The polypeptide is Ribose import ATP-binding protein RbsA (Corynebacterium glutamicum (strain ATCC 13032 / DSM 20300 / JCM 1318 / BCRC 11384 / CCUG 27702 / LMG 3730 / NBRC 12168 / NCIMB 10025 / NRRL B-2784 / 534)).